Reading from the N-terminus, the 136-residue chain is uncharacterized protein (136 aa).

Its subcellular location is the mitochondrion. This is an uncharacterized protein from Marchantia polymorpha (Common liverwort).